The chain runs to 543 residues: Oxalate--CoA ligase (543 aa).

196-207 (HTSGTTSTPKTV) lines the ATP pocket. An FACS motif is present at residues 410 to 458 (ENYFRTGDQGYFDPEGFLVLTGRIKELINRGGEKISPIELDGIMLSHPK). A C-terminal peroxisome targeting signal (PTS1) motif is present at residues 541-543 (SKL).

This sequence belongs to the ATP-dependent AMP-binding enzyme family. Interacts with PEX5.

Its subcellular location is the peroxisome matrix. It localises to the peroxisome membrane. The enzyme catalyses oxalate + ATP + CoA = oxalyl-CoA + AMP + diphosphate. Its function is as follows. Catalyzes the first step in a degradation pathway of oxalate to CO(2) to protect the cell against the harmful effects of oxalate derived from endogenous processes or an environmental sources. The protein is Oxalate--CoA ligase of Saccharomyces cerevisiae (strain ATCC 204508 / S288c) (Baker's yeast).